A 1088-amino-acid polypeptide reads, in one-letter code: Protein argonaute 18 (1088 aa).

Positions 1 to 220 (MASRGGGQHQ…QPPPDLPQAP (220 aa)) are disordered. 6 stretches are compositionally biased toward gly residues: residues 20–30 (GGYGRGGGGGR), 51–86 (YPGG…GQGR), 95–127 (GRGY…GGYH), 135–148 (GRGG…GGGY), 161–182 (ARGG…YGRG), and 191–206 (GRGG…GGGS). The segment covering 211 to 220 (QPPPDLPQAP) has biased composition (pro residues). A PAZ domain is found at 477-574 (TVGYFLNNYG…LPMELCNIVP (98 aa)). The region spanning 747 to 1056 (LLLVVMTDDK…LAFRARFYLT (310 aa)) is the Piwi domain.

Belongs to the argonaute family. Ago subfamily.

Probably involved in the RNA silencing pathway. May bind to short RNAs such as microRNAs (miRNAs) or short interfering RNAs (siRNAs), and represses the translation of mRNAs which are complementary to them. The chain is Protein argonaute 18 (AGO18) from Oryza sativa subsp. japonica (Rice).